The chain runs to 352 residues: MLLFSVLLLLSLVTGTQLGPRTPLPEAGVAILGRARGAHRPQPPHPPSPVSECGDRSIFEGRTRYSRITGGMEAEVGEFPWQVSIQARSEPFCGGSILNKWWILTAAHCLYSEELFPEELSVVLGTNDLTSPSMEIKEVASIILHKDFKRANMDNDIALLLLASPIKLDDLKVPICLPTQPGPATWRECWVAGWGQTNAADKNSVKTDLMKAPMVIMDWEECSKMFPKLTKNMLCAGYKNESYDACKGDSGGPLVCTPEPGEKWYQVGIISWGKSCGEKNTPGIYTSLVNYNLWIEKVTQLEGRPFNAEKRRTSVKQKPMGSPVSGVPEPGSPRSWLLLCPLSHVLFRAILY.

The N-terminal stretch at 1–18 (MLLFSVLLLLSLVTGTQL) is a signal peptide. The Peptidase S1 domain maps to 68–300 (ITGGMEAEVG…YNLWIEKVTQ (233 aa)). The cysteines at positions 93 and 109 are disulfide-linked. Active-site charge relay system residues include H108 and D156. 3 cysteine pairs are disulfide-bonded: C189–C256, C222–C235, and C246–C276. The N-linked (GlcNAc...) asparagine glycan is linked to N240. S250 acts as the Charge relay system in catalysis. The interval 308-330 (AEKRRTSVKQKPMGSPVSGVPEP) is disordered. The span at 319 to 330 (PMGSPVSGVPEP) shows a compositional bias: low complexity. A lipid anchor (GPI-anchor amidated serine) is attached at S325. The propeptide at 326–352 (GVPEPGSPRSWLLLCPLSHVLFRAILY) is removed in mature form.

The protein belongs to the peptidase S1 family. In terms of tissue distribution, only detected in testis. Expressed in spermatogonia, spermatocytes, spermatids, Leydig and Sertoli cells. Expressed in prostate cancer and ovarian cancer (at protein level).

The protein localises to the cell membrane. The protein resides in the cytoplasm. It is found in the cytosol. In terms of biological role, probable serine protease, which plays a crucial role in the fertility of male mice including sperm migration and sperm-egg interaction. This is Serine protease 55 (PRSS55) from Homo sapiens (Human).